A 303-amino-acid polypeptide reads, in one-letter code: Cytosolic-abundant heat soluble protein 3 (303 aa).

Positions 1 to 19 (MSSRQNQQSSSQHSSSSQQ) are enriched in low complexity. The disordered stretch occupies residues 1-67 (MSSRQNQQSS…PGSHSEVHEE (67 aa)). Residues 170-257 (ARQDEQDAGM…ESAKAQTNVN (88 aa)) are a coiled coil. CAHS motif regions lie at residues 184–202 (YREEVERDAELIRQILERQ) and 221–239 (QEREIQLEAEYAMRALELE). A compositionally biased stretch (polar residues) spans 270–280 (KGAIQTSADKS). Residues 270-303 (KGAIQTSADKSSTTKTGPTTVTQIKHTEQHTERR) form a disordered region. Over residues 282–291 (TTKTGPTTVT) the composition is skewed to low complexity. Positions 294–303 (KHTEQHTERR) are enriched in basic and acidic residues.

Belongs to the Cytosolic-abundant heat soluble protein (CAHS) family.

It is found in the cytoplasm. CAHS proteins are cytosolic heat soluble proteins that seem to contribute to the anhydrobiosis in tardigrades, but their specific mechanisms are yet to be identified. It is possible that protection during anhydrobiosis might occur via the stabilization of vitrifying small molecules such as sugars, but not via the direct glass transition of CAHS proteins themselves. This is Cytosolic-abundant heat soluble protein 3 from Ramazzottius varieornatus (Water bear).